The primary structure comprises 122 residues: uncharacterized protein (122 aa).

3 consecutive transmembrane segments (helical) span residues 33 to 53, 58 to 78, and 97 to 117; these read ALGL…LTIP, VLGV…LLRW, and PGYL…LVVA.

It to E.coli YidH.

Its subcellular location is the cell membrane. This is an uncharacterized protein from Mycobacterium tuberculosis (strain CDC 1551 / Oshkosh).